The primary structure comprises 260 residues: Cytochrome c oxidase subunit 3 (260 aa).

Helical transmembrane passes span 41–61 (LTLV…RDII), 81–101 (GMIL…WAFF), 133–153 (TGVL…ILAG), 161–181 (ALFL…WEYI), 196–216 (FFVA…FLMV), and 238–258 (AWYW…IYWW).

It belongs to the cytochrome c oxidase subunit 3 family. As to quaternary structure, component of the cytochrome c oxidase (complex IV, CIV), a multisubunit enzyme composed of a catalytic core of 3 subunits and several supernumerary subunits. The complex exists as a monomer or a dimer and forms supercomplexes (SCs) in the inner mitochondrial membrane with ubiquinol-cytochrome c oxidoreductase (cytochrome b-c1 complex, complex III, CIII).

It localises to the mitochondrion inner membrane. The catalysed reaction is 4 Fe(II)-[cytochrome c] + O2 + 8 H(+)(in) = 4 Fe(III)-[cytochrome c] + 2 H2O + 4 H(+)(out). Component of the cytochrome c oxidase, the last enzyme in the mitochondrial electron transport chain which drives oxidative phosphorylation. The respiratory chain contains 3 multisubunit complexes succinate dehydrogenase (complex II, CII), ubiquinol-cytochrome c oxidoreductase (cytochrome b-c1 complex, complex III, CIII) and cytochrome c oxidase (complex IV, CIV), that cooperate to transfer electrons derived from NADH and succinate to molecular oxygen, creating an electrochemical gradient over the inner membrane that drives transmembrane transport and the ATP synthase. Cytochrome c oxidase is the component of the respiratory chain that catalyzes the reduction of oxygen to water. Electrons originating from reduced cytochrome c in the intermembrane space (IMS) are transferred via the dinuclear copper A center (CU(A)) of subunit 2 and heme A of subunit 1 to the active site in subunit 1, a binuclear center (BNC) formed by heme A3 and copper B (CU(B)). The BNC reduces molecular oxygen to 2 water molecules using 4 electrons from cytochrome c in the IMS and 4 protons from the mitochondrial matrix. This chain is Cytochrome c oxidase subunit 3 (COIII), found in Strongylocentrotus purpuratus (Purple sea urchin).